The chain runs to 234 residues: L-cystine transport system permease protein TcyB (234 aa).

5 helical membrane-spanning segments follow: residues 8-28 (ALTLGTAIPWDLVQQSFWPIL), 36-56 (IPLTILSFIFGMILALITALA), 78-98 (TPLLVQLFIIFYLFPAFNVTL), 100-120 (PFPSAVIAFSLNVGAYASEII), and 199-219 (ILVIYIEAAFIYWIICFLLSL). Positions 32–221 (IYYTIPLTIL…IICFLLSLVQ (190 aa)) constitute an ABC transmembrane type-1 domain.

It belongs to the binding-protein-dependent transport system permease family. The complex is composed of two ATP-binding proteins (TcyC), two transmembrane proteins (TcyB) and a solute-binding protein (TcyA).

It localises to the cell membrane. Its function is as follows. Part of the ABC transporter complex TcyABC involved in L-cystine import. Probably responsible for the translocation of the substrate across the membrane. This chain is L-cystine transport system permease protein TcyB (tcyB), found in Bacillus subtilis (strain 168).